The sequence spans 1062 residues: Roc-COR-CHAT protease (1062 aa).

LRR repeat units follow at residues L70–Q94, L95–P116, M115–K141, L142–P159, A160–G180, F181–L203, P204–P226, and G228–S249. Residues D470–F660 enclose the COR domain. The disordered stretch occupies residues E836–T856. Active-site residues include H931 and C980.

In terms of biological role, a dedicated protease for substrate gasdermin bGSDM; cleaves the bGSDM precursor, releasing the pore-forming moiety, which integrates into the membrane and triggers cell death. Probably involved in defense against bacteriophages. Expression of bGSDM and this neighboring protease is highly toxic in E.coli. The sequence is that of Roc-COR-CHAT protease from Unknown prokaryotic organism.